Here is a 190-residue protein sequence, read N- to C-terminus: Elongation factor P-like protein (190 aa).

Belongs to the elongation factor P family.

In Shigella dysenteriae serotype 1 (strain Sd197), this protein is Elongation factor P-like protein.